The primary structure comprises 489 residues: Long chain base biosynthesis protein 2a (489 aa).

The helical transmembrane segment at 2–22 (ITIPYLTAVSTYFSYGLLFAF) threads the bilayer. At Lys311 the chain carries N6-(pyridoxal phosphate)lysine.

Belongs to the class-II pyridoxal-phosphate-dependent aminotransferase family. As to quaternary structure, heterodimer with LCB1. Component of the serine palmitoyltransferase (SPT) complex, composed of LCB1 and LCB2 (LCB2a or LCB2b). Requires pyridoxal 5'-phosphate as cofactor. As to expression, ubiquitous. Detected in leaves, roots, stems, flowers and at a lower level in mature seeds.

It is found in the endoplasmic reticulum membrane. It catalyses the reaction L-serine + hexadecanoyl-CoA + H(+) = 3-oxosphinganine + CO2 + CoA. Its pathway is lipid metabolism; sphingolipid metabolism. In terms of biological role, serine palmitoyltransferase (SPT). The heterodimer formed with LCB1 constitutes the catalytic core. Involved in the regulation of the programmed cell death (PCD) signaling pathway. Plays an important role during male gametogenesis and embryogenesis. The protein is Long chain base biosynthesis protein 2a (LCB2a) of Arabidopsis thaliana (Mouse-ear cress).